A 211-amino-acid chain; its full sequence is 5,6-dimethylbenzimidazole synthase (211 aa).

Residues 22-26 (RRDVR), serine 50, leucine 99, and serine 158 each bind FMN.

It belongs to the BluB family. In terms of assembly, homooctamer.

It carries out the reaction FMNH2 + O2 = dialurate + 5,6-dimethylbenzimidazole + D-erythrose 4-phosphate + H(+). Involved in the biosynthesis of cobalamin (vitamin B12). Catalyzes the oxidative fragmentation and contraction of the isoalloxazine heterocycle and the cleavage of the ribityl tail of FMNH(2) to form 5,6-dimethylbenzimidazole (DMB) and D-erythrose 4-phosphate (E4P). NAD(P)H is only required initially to reduce FMN and oxygen drives the oxidative fragmentation. The polypeptide is 5,6-dimethylbenzimidazole synthase (Rhodospirillum rubrum (strain ATCC 11170 / ATH 1.1.1 / DSM 467 / LMG 4362 / NCIMB 8255 / S1)).